Here is a 229-residue protein sequence, read N- to C-terminus: Cilia- and flagella-associated protein 95 (229 aa).

Over 1–123 (MDSLDRSCQD…LLNEETVSSG (123 aa)) the chain is Extracellular. An N-linked (GlcNAc...) asparagine glycan is attached at Asn75. A helical membrane pass occupies residues 124-140 (IIERVTGLPATGFGAVF). Topologically, residues 141-229 (PRHPPDWSKM…PLTSGPIVPI (89 aa)) are cytoplasmic. Positions 153 to 163 (LTTYSEDYVPP) are mn.

Microtubule inner protein component of sperm flagellar doublet microtubules. Interacts with MYH9. Interacts with MYH10. In terms of tissue distribution, expressed in undifferentiated embryonic stem cells. Expressed in airway epithelial cells.

The protein resides in the cytoplasm. The protein localises to the cytoskeleton. It is found in the cilium axoneme. It localises to the flagellum axoneme. Its subcellular location is the cell membrane. In terms of biological role, microtubule inner protein (MIP) part of the dynein-decorated doublet microtubules (DMTs) in cilia axoneme, which is required for motile cilia beating. This chain is Cilia- and flagella-associated protein 95, found in Homo sapiens (Human).